The sequence spans 139 residues: Chemical-damaging agent resistance protein B (139 aa).

The protein belongs to the CAPAB/TerDEXZ family.

Functionally, not known; could confer methyl methane sulfonate (MMS), mitomycin C (MC), and UV resistance. This chain is Chemical-damaging agent resistance protein B, found in Clostridium acetobutylicum.